The primary structure comprises 217 residues: ATP-dependent Clp protease proteolytic subunit 1 (217 aa).

A disordered region spans residues 1–24 (MTPLTTGWHPALSPRAEEGDTPPS). Ser108 acts as the Nucleophile in catalysis. Residue His133 is part of the active site.

It belongs to the peptidase S14 family. As to quaternary structure, fourteen ClpP subunits assemble into 2 heptameric rings which stack back to back to give a disk-like structure with a central cavity, resembling the structure of eukaryotic proteasomes.

The protein localises to the cytoplasm. The enzyme catalyses Hydrolysis of proteins to small peptides in the presence of ATP and magnesium. alpha-casein is the usual test substrate. In the absence of ATP, only oligopeptides shorter than five residues are hydrolyzed (such as succinyl-Leu-Tyr-|-NHMec, and Leu-Tyr-Leu-|-Tyr-Trp, in which cleavage of the -Tyr-|-Leu- and -Tyr-|-Trp bonds also occurs).. In terms of biological role, cleaves peptides in various proteins in a process that requires ATP hydrolysis. Has a chymotrypsin-like activity. Plays a major role in the degradation of misfolded proteins. This Streptomyces avermitilis (strain ATCC 31267 / DSM 46492 / JCM 5070 / NBRC 14893 / NCIMB 12804 / NRRL 8165 / MA-4680) protein is ATP-dependent Clp protease proteolytic subunit 1.